The following is a 132-amino-acid chain: Dehydratase CTB10 (132 aa).

One can recognise an EthD domain in the interval 21 to 117; it reads PDQSEEDHHN…IPDHFNFADM (97 aa).

It belongs to the tpcK family.

It participates in mycotoxin biosynthesis. In terms of biological role, dehydratase; part of the gene cluster that mediates the biosynthesis of cercosporin, a light-activated, non-host-selective toxin. The perylenequinone chromophore of cercosporin absorbs light energy to attain an electronically-activated triplet state and produces active oxygen species such as the hydroxyl radical, superoxide, hydrogen peroxide or singlet oxygen upon reaction with oxygen molecules. These reactive oxygen species cause damage to various cellular components including lipids, proteins and nucleic acids. The first step of cercosporin biosynthesis is performed by the polyketide synthase CTB1 which catalyzes the formation of nor-toralactone. The starter unit acyltransferase (SAT) domain of CTB1 initiates polyketide extension by the selective utilization of acetyl-CoA, which is elongated to the heptaketide in the beta-ketoacyl synthase (KS) domain by successive condensations with six malonyl units introduced by the malonyl acyltransferase (MAT) domain. The product template (PT) domain catalyzes C4-C9 and C2-C11 aldol cyclizations and dehydrations to a trihydroxynaphthalene, which is thought to be delivered to the thioesterase (TE) domain for product release. The bifunctional enzyme CTB3 then methylates nor-toralactone to toralactone before conducting an unusual oxidative aromatic ring opening. The O-methyltransferase CTB2 further methylates the nascent OH-6 of the CBT3 product, blocking further oxidation at this site before the reductase CTB6 reduces the 2-oxopropyl ketone at position C7, giving naphthalene. The FAD-dependent monooxygenase CTB5 in concert with the multicopper oxidase CTB12 are responsible for homodimerization of naphthalene with CTB7 installing the dioxepine moiety, finally producing cercosporin. The fasciclin domain-containing protein CTB11 might act with CTB5 and CTB12 whereas the roles of CTB9 and CTB10 have still to be elucidated. The protein is Dehydratase CTB10 of Cercospora beticola (Sugarbeet leaf spot fungus).